The sequence spans 872 residues: Adhesive plaque matrix protein (872 aa).

Residues 1–20 (MEGIKLNLCLLCIFSCDIFA) form the signal peptide. The segment at 21–41 (LSNGNIHNVYGSAYSGASAGA) is nonrepetitive linker. 69 consecutive repeat copies span residues 124–133 (YKAKTSYPPS), 134–143 (YKHKITYPPT), 144–153 (YKPKITYPPT), 154–163 (YKQKPSYPPS), 174–183 (YKPKITYPPT), 184–192 (YKRKPSYTP), 193–202 (YKPKATYPPT), 203–212 (YKPKITYPPT), 213–221 (YKRKPSYTP), 222–231 (YKPKTTYPPT), 232–241 (YKPKISYPSI), 242–251 (YKPKASYVSS), 252–261 (YKSKKTYPPT), 262–271 (YKPKISYPPT), 272–281 (YKPKPSYPPT), 282–291 (YKPKVTYPPT), 292–301 (YKPKPSYPPT), 302–311 (YKPKITYPPT), 312–321 (YKPKPSYPTP), 322–331 (YKQKPSYPPI), 332–341 (YKSKSSYPTS), 342–351 (YKSKKTYPPT), 352–361 (YKPKITYPPT), 362–371 (YKPKPSYPPS), 372–381 (YKPKKTYSPT), 382–391 (YKPKITYPPT), 402–411 (YKPKTTYPPT), 412–421 (YKPKISYPPT), 422–431 (YKPKASYVSS), 432–441 (YKSKKTYPPT), 442–451 (YKPKISYPPT), 452–461 (YKPKPSYPPT), 462–471 (YKPKITYPPT), 472–481 (YKPKPSYPPT), 482–491 (YKPKITYPPT), 502–511 (YKQKPSYPPI), 512–521 (YKSKSSYPTS), 522–531 (YKSKKTYPPT), 532–541 (YKPKITYPPT), 542–551 (YKPKPSYPPS), 552–561 (YKPKTTYPPT), 562–571 (YKPKIRYPPT), 572–581 (YKPKASYPPT), 582–591 (YKPKITYPPT), 602–611 (YKQKPSYPPI), 612–621 (YKSKSSYPTA), 622–631 (YKSKKTYPPT), 632–641 (YKPKITYPPT), 642–651 (YKPKPSYPPS), 652–661 (YRPKITYPPT), 662–671 (YKPKKSYPQA), 672–681 (YKSKGSYPPS), 682–691 (YQPKKTYPPS), 702–711 (YKPKISYPPT), 712–721 (YKTKPSYPAS), 722–731 (YKRKTSYPPT), 732–741 (YKPKISYPST), 742–751 (YKAKPSYPPT), 752–761 (YKPKPSYASS), 762–771 (YKPKIRYPPT), 772–781 (YKPKPSYASS), 782–791 (YKPKIRYPPT), 792–801 (YKPKPSYASS), 812–821 (YKPKPSYASS), 822–831 (YKPKITYPPT), 832–841 (YKPKISYPPT), 842–851 (YKPKITYPPT), 852–861 (YKPKISYPPA), and 862–871 (YKPKISYPSQ). Residues 124–871 (YKAKTSYPPS…YKPKISYPSQ (748 aa)) are 69 X 10 AA tandem repeats of Y-[KRQ]-[PSTAHQR]-K-[AIPTSKGV]-[STR]-Y-[PTSVA]-[PSTQA]-[STYIPAQ]. The interval 184 to 192 (YKRKPSYTP) is nonapeptide 1. The segment at 213–221 (YKRKPSYTP) is nonapeptide 2. 2 stretches are compositionally biased toward pro residues: residues 273-282 (KPKPSYPPTY) and 291-302 (TYKPKPSYPPTY). Residues 273–781 (KPKPSYPPTY…YKPKPSYASS (509 aa)) are disordered. A compositionally biased stretch (low complexity) spans 320-360 (TPYKQKPSYPPIYKSKSSYPTSYKSKKTYPPTYKPKITYPP). Pro residues predominate over residues 361-372 (TYKPKPSYPPSY). Over residues 377–390 (TYSPTYKPKITYPP) the composition is skewed to low complexity. Residues 391 to 402 (TYKPKPSYPPSY) are compositionally biased toward pro residues. A compositionally biased stretch (low complexity) spans 403 to 450 (KPKTTYPPTYKPKISYPPTYKPKASYVSSYKSKKTYPPTYKPKISYPP). 2 stretches are compositionally biased toward pro residues: residues 451–462 (TYKPKPSYPPTY) and 471–482 (TYKPKPSYPPTY). Over residues 501-540 (PYKQKPSYPPIYKSKSSYPTSYKSKKTYPPTYKPKITYPP) the composition is skewed to low complexity. Pro residues predominate over residues 541 to 552 (TYKPKPSYPPSY). Low complexity-rich tracts occupy residues 568 to 590 (YPPT…TYPP) and 600 to 640 (TPYK…TYPP). Over residues 641–652 (TYKPKPSYPPSY) the composition is skewed to pro residues. Composition is skewed to low complexity over residues 677-690 (SYPP…TYPP) and 698-719 (YPPT…PSYP). Positions 754-763 (PKPSYASSYK) are enriched in low complexity.

Hydroxylated on proline (mono- or dihydroxylation) and tyrosine residues (to L-DOPA = 3',4'-dihydroxyphenylalanine) of the tandem repeats. In terms of tissue distribution, produced by the byssal gland.

It is found in the secreted. In terms of biological role, provides adhesiveness to the mussel's foot. Mussels produce one of the strongest water insoluble glues. The mussel's adhesive is a bundle of threads, called a byssus, formed by a fibrous collagenous core coated with adhesive proteins. This is Adhesive plaque matrix protein (FP1) from Mytilus coruscus (Sea mussel).